Consider the following 342-residue polypeptide: Nicotinate-nucleotide--dimethylbenzimidazole phosphoribosyltransferase (342 aa).

The active-site Proton acceptor is the Glu-311.

Belongs to the CobT family.

The catalysed reaction is 5,6-dimethylbenzimidazole + nicotinate beta-D-ribonucleotide = alpha-ribazole 5'-phosphate + nicotinate + H(+). It participates in nucleoside biosynthesis; alpha-ribazole biosynthesis; alpha-ribazole from 5,6-dimethylbenzimidazole: step 1/2. Catalyzes the synthesis of alpha-ribazole-5'-phosphate from nicotinate mononucleotide (NAMN) and 5,6-dimethylbenzimidazole (DMB). This Shewanella loihica (strain ATCC BAA-1088 / PV-4) protein is Nicotinate-nucleotide--dimethylbenzimidazole phosphoribosyltransferase.